The following is a 459-amino-acid chain: Putrescine aminotransferase (459 aa).

Pyridoxal 5'-phosphate-binding positions include 150–151 and glutamine 274; that span reads GT. Lysine 300 carries the N6-(pyridoxal phosphate)lysine modification. A pyridoxal 5'-phosphate-binding site is contributed by threonine 332.

It belongs to the class-III pyridoxal-phosphate-dependent aminotransferase family. Putrescine aminotransferase subfamily. The cofactor is pyridoxal 5'-phosphate.

The enzyme catalyses an alkane-alpha,omega-diamine + 2-oxoglutarate = an omega-aminoaldehyde + L-glutamate. The catalysed reaction is putrescine + 2-oxoglutarate = 1-pyrroline + L-glutamate + H2O. It catalyses the reaction cadaverine + 2-oxoglutarate = 5-aminopentanal + L-glutamate. It participates in amine and polyamine degradation; putrescine degradation; 4-aminobutanal from putrescine (transaminase route): step 1/1. Catalyzes the aminotransferase reaction from putrescine to 2-oxoglutarate, leading to glutamate and 4-aminobutanal, which spontaneously cyclizes to form 1-pyrroline. This is the first step in one of two pathways for putrescine degradation, where putrescine is converted into 4-aminobutanoate (gamma-aminobutyrate or GABA) via 4-aminobutanal. Also functions as a cadaverine transaminase in a a L-lysine degradation pathway to succinate that proceeds via cadaverine, glutarate and L-2-hydroxyglutarate. The protein is Putrescine aminotransferase of Escherichia coli O6:H1 (strain CFT073 / ATCC 700928 / UPEC).